The chain runs to 233 residues: tRNA1(Val) (adenine(37)-N6)-methyltransferase (233 aa).

The protein belongs to the methyltransferase superfamily. tRNA (adenine-N(6)-)-methyltransferase family.

The protein resides in the cytoplasm. It catalyses the reaction adenosine(37) in tRNA1(Val) + S-adenosyl-L-methionine = N(6)-methyladenosine(37) in tRNA1(Val) + S-adenosyl-L-homocysteine + H(+). Specifically methylates the adenine in position 37 of tRNA(1)(Val) (anticodon cmo5UAC). In Shewanella amazonensis (strain ATCC BAA-1098 / SB2B), this protein is tRNA1(Val) (adenine(37)-N6)-methyltransferase.